The chain runs to 205 residues: Beta-crystallin B2 (205 aa).

Ala2 bears the N-acetylalanine mark. Residues 2–16 (ASDHQSPATKQQQPS) form an N-terminal arm region. Beta/gamma crystallin 'Greek key' domains follow at residues 17-56 (SKIV…LVHS) and 57-101 (GPWV…RPIK). Residues 102-106 (VDSQE) form a connecting peptide region. Beta/gamma crystallin 'Greek key' domains lie at 107–148 (HKIV…RVQS) and 149–191 (GTWV…RRIR). A C-terminal arm region spans residues 193-205 (MQWHQRGTFHPTN).

This sequence belongs to the beta/gamma-crystallin family. In terms of assembly, homo/heterodimer, or complexes of higher-order. The structure of beta-crystallin oligomers seems to be stabilized through interactions between the N-terminal arms. Post-translationally, the N-terminus is blocked.

Functionally, crystallins are the dominant structural components of the vertebrate eye lens. The protein is Beta-crystallin B2 of Aquarana catesbeiana (American bullfrog).